We begin with the raw amino-acid sequence, 114 residues long: Transmembrane protein 256 homolog (114 aa).

A signal peptide spans 1–25 (MAAGRVWGRLGAVSGALAVTAGAYG). The Extracellular segment spans residues 26–64 (AHGFRRSDRDEYLKELFETGNRYHFLHSLALLAVPHCRR). The chain crosses the membrane as a helical span at residues 65–85 (PLLAGSLLTSGIVLFSGTFYY). Residues 86-93 (QALSGDPT) are Cytoplasmic-facing. The chain crosses the membrane as a helical span at residues 94 to 114 (LTKAAPYGGTLLILGWAAMAL).

Belongs to the TMEM256 family.

Its subcellular location is the cell membrane. The chain is Transmembrane protein 256 homolog from Bufo gargarizans (Asian toad).